Reading from the N-terminus, the 265-residue chain is Ribosomal RNA small subunit methyltransferase A (265 aa).

Residues asparagine 13, leucine 15, glycine 39, glutamate 59, aspartate 87, and asparagine 108 each contribute to the S-adenosyl-L-methionine site.

Belongs to the class I-like SAM-binding methyltransferase superfamily. rRNA adenine N(6)-methyltransferase family. RsmA subfamily.

It is found in the cytoplasm. The enzyme catalyses adenosine(1518)/adenosine(1519) in 16S rRNA + 4 S-adenosyl-L-methionine = N(6)-dimethyladenosine(1518)/N(6)-dimethyladenosine(1519) in 16S rRNA + 4 S-adenosyl-L-homocysteine + 4 H(+). In terms of biological role, specifically dimethylates two adjacent adenosines (A1518 and A1519) in the loop of a conserved hairpin near the 3'-end of 16S rRNA in the 30S particle. May play a critical role in biogenesis of 30S subunits. The polypeptide is Ribosomal RNA small subunit methyltransferase A (Aliarcobacter butzleri (strain RM4018) (Arcobacter butzleri)).